Here is a 707-residue protein sequence, read N- to C-terminus: Serine/threonine protein kinase UL97 (707 aa).

Positions 1–14 (MSSALRSRARSASL) are enriched in low complexity. 4 disordered regions span residues 1–32 (MSSALRSRARSASLGTTTQGWDPPPLRRPSRA), 113–147 (DGEKEDAASDKENQRRPVVPSTSSRGSAASGDGYH), 176–199 (FTGGSDPSDSVSGVRGGRKRPLRP), and 231–264 (ESQDSAVASGPGRVPQPLSGSSGEESATAVEADS). Residues 113–127 (DGEKEDAASDKENQR) are compositionally biased toward basic and acidic residues. A compositionally biased stretch (low complexity) spans 178–188 (GGSDPSDSVSG). Aspartate 456 functions as the Proton acceptor in the catalytic mechanism.

Belongs to the protein kinase superfamily. Tyr protein kinase family. HCMV ganciclovir subfamily. As to quaternary structure, interacts with UL83. Post-translationally, autophosphorylates on serine and threonine residues.

It localises to the virion. The catalysed reaction is L-seryl-[protein] + ATP = O-phospho-L-seryl-[protein] + ADP + H(+). The enzyme catalyses L-threonyl-[protein] + ATP = O-phospho-L-threonyl-[protein] + ADP + H(+). Functionally, serine/threonine protein kinase that plays important roles in several processes including nuclear viral egress, viral replication or regulation of host cell cycle progression. Participates in the acquisition of tegument during virion morphogenesis in the nucleus. Redistributes the host nuclear lamina by phosphorylating cellular Lamins-A/C. Plays a role in viral DNA synthesis by phosphorylating the DNA polymerase processivity factor UL44. Stimulates host cell cycle to support viral DNA synthesis by phosphorylating host retinoblastoma/RB1 protein. Additional substrates have been identified including host EF1D or H2B. Also phosphorylates host SAMHD1 and thereby counteracts its antiviral effect by reducing its dNTP hydrolase activity. The polypeptide is Serine/threonine protein kinase UL97 (UL97) (Homo sapiens (Human)).